A 287-amino-acid polypeptide reads, in one-letter code: Diaminopimelate epimerase (287 aa).

Asn-11, Gln-44, and Asn-64 together coordinate substrate. The active-site Proton donor is Cys-73. Residues 74–75 (GN), Asn-157, Asn-190, and 208–209 (ER) each bind substrate. Catalysis depends on Cys-217, which acts as the Proton acceptor. Residue 218 to 219 (GT) coordinates substrate.

The protein belongs to the diaminopimelate epimerase family. As to quaternary structure, homodimer.

The protein resides in the cytoplasm. The enzyme catalyses (2S,6S)-2,6-diaminopimelate = meso-2,6-diaminopimelate. The protein operates within amino-acid biosynthesis; L-lysine biosynthesis via DAP pathway; DL-2,6-diaminopimelate from LL-2,6-diaminopimelate: step 1/1. Catalyzes the stereoinversion of LL-2,6-diaminopimelate (L,L-DAP) to meso-diaminopimelate (meso-DAP), a precursor of L-lysine and an essential component of the bacterial peptidoglycan. In Halorhodospira halophila (strain DSM 244 / SL1) (Ectothiorhodospira halophila (strain DSM 244 / SL1)), this protein is Diaminopimelate epimerase.